The primary structure comprises 366 residues: Growth hormone secretagogue receptor type 1 (366 aa).

At 1–40 (MWNATLSEEPGYNLTLPDLGWDAPADNDSLTDELLPLFPA) the chain is on the extracellular side. N-linked (GlcNAc...) asparagine glycosylation is found at Asn3, Asn13, and Asn27. Residues 41–66 (PLLAGVTATCVALFVVGIAGNLLTML) form a helical membrane-spanning segment. Topologically, residues 67–72 (VVSRFR) are cytoplasmic. Residues 73-96 (ELRTTTNLYLSSMAFSDLLIFLCM) form a helical membrane-spanning segment. The Extracellular segment spans residues 97–117 (PLDLVRLWQYRPWNFGDLLCK). A disulfide bridge links Cys116 with Cys198. The chain crosses the membrane as a helical span at residues 118–139 (LFQFVSESCTYATVLTITALSV). The Cytoplasmic segment spans residues 140 to 162 (ERYFAICFPLRAKVVVTKGRVKL). The chain crosses the membrane as a helical span at residues 163–183 (VILVIWAVAFCSAGPIFVLVG). Topologically, residues 184–211 (VEHENGTDPRDTNECRATEFAVRSGLLT) are extracellular. Asn188 carries N-linked (GlcNAc...) asparagine glycosylation. Residues 212 to 235 (VMVWVSSVFFFLPVFCLTVLYSLI) traverse the membrane as a helical segment. Residues 236–263 (GRKLWRRKRGEAAVGASLRDQNHKQTVK) are Cytoplasmic-facing. Residues 264–285 (MLAVVVFAFILCWLPFHVGRYL) form a helical membrane-spanning segment. Residues 286–302 (FSKSFEPGSLEIAQISQ) are Extracellular-facing. The chain crosses the membrane as a helical span at residues 303-326 (YCNLVSFVLFYLSAAINPILYNIM). The Cytoplasmic portion of the chain corresponds to 327–366 (SKKYRVAVFKLLGFEPFSQRKLSTLKDESSRAWTETSINT).

It belongs to the G-protein coupled receptor 1 family.

It is found in the cell membrane. Functionally, receptor for ghrelin, coupled to G-alpha-11 proteins. Stimulates growth hormone secretion. Also binds other growth hormone releasing peptides (GHRP) (e.g. Met-enkephalin and GHRP-6) as well as non-peptide, low molecular weight secretagogues (e.g. L-692,429, MK-0677, adenosine). In Mustela putorius furo (European domestic ferret), this protein is Growth hormone secretagogue receptor type 1 (GHSR).